The primary structure comprises 513 residues: Beta-glucosidase 5 (513 aa).

Positions Met1 to Gly26 are cleaved as a signal peptide. Gln46 serves as a coordination point for a beta-D-glucoside. Residue Glu192 is the Proton donor of the active site. A disulfide bridge links Cys211 with Cys220. N-linked (GlcNAc...) asparagine glycans are attached at residues Asn224 and Asn273. A beta-D-glucoside contacts are provided by Tyr336 and Glu405. Residue Glu405 is the Nucleophile of the active site. Asn412 carries an N-linked (GlcNAc...) asparagine glycan. Residues Trp447, Glu454–Tyr455, and Tyr463 contribute to the a beta-D-glucoside site.

It belongs to the glycosyl hydrolase 1 family.

The catalysed reaction is Hydrolysis of terminal, non-reducing beta-D-glucosyl residues with release of beta-D-glucose.. The sequence is that of Beta-glucosidase 5 (BGLU5) from Oryza sativa subsp. japonica (Rice).